We begin with the raw amino-acid sequence, 376 residues long: uncharacterized protein (376 aa).

An N-terminal signal peptide occupies residues Met-1–Ala-22.

It belongs to the ascovirus HvAV ORF17 family.

This is an uncharacterized protein from Heliothis virescens ascovirus 3e (HvAV-3e).